The chain runs to 76 residues: MSGRGKTGGKARAKAKTRSSRAGLQFPVGRVHRLLRKGNYAQRVGAGAPVYLILELAGNAARDNKKTRIIPRHLQL.

Positions 1 to 23 are disordered; sequence MSGRGKTGGKARAKAKTRSSRAG. Residue Ser-2 is modified to N-acetylserine; in acipensins. The residue at position 2 (Ser-2) is an N-acetylserine; in histone H2A. Ser-2 bears the Phosphoserine; in histone H2A mark. Lys-6 carries the N6-(2-hydroxyisobutyryl)lysine modification. N6-acetyllysine; in histone H2A is present on Lys-6. Basic residues predominate over residues 7–19; that stretch reads TGGKARAKAKTRS. Lys-10 carries the post-translational modification N6-(2-hydroxyisobutyryl)lysine; alternate. The residue at position 10 (Lys-10) is an N6-lactoyllysine; alternate. At Lys-10 the chain carries N6-succinyllysine. Residues Lys-14 and Lys-16 each participate in a glycyl lysine isopeptide (Lys-Gly) (interchain with G-Cter in ubiquitin); in histone H2A cross-link. Lys-37 bears the N6-(2-hydroxyisobutyryl)lysine; alternate mark. 2 positions are modified to N6-(2-hydroxyisobutyryl)lysine: Lys-65 and Lys-66.

Belongs to the histone H2A family. As to quaternary structure, the nucleosome is a histone octamer containing two molecules each of H2A, H2B, H3 and H4 assembled in one H3-H4 heterotetramer and two H2A-H2B heterodimers. The octamer wraps approximately 147 bp of DNA. In terms of processing, phosphorylation on Ser-2 is enhanced during mitosis. Phosphorylation on Ser-2 directly represses transcription.

The protein localises to the nucleus. It is found in the chromosome. Functionally, core component of nucleosome. Nucleosomes wrap and compact DNA into chromatin, limiting DNA accessibility to the cellular machineries which require DNA as a template. Histones thereby play a central role in transcription regulation, DNA repair, DNA replication and chromosomal stability. DNA accessibility is regulated via a complex set of post-translational modifications of histones, also called histone code, and nucleosome remodeling. Its function is as follows. Acipensins are antimicrobial peptides. Acipensins 1 and 2 have antibacterial activity against Gram-positive bacteria L.monocytogenes EGD (MIC are 1.1 uM and 1.0 uM, respectively) and S.aureus ATCC 33591 (MIC are 0.9 uM and 0.6 uM, respectively), against Gram-negative bacterium E.coli ML-35p (MIC are 0.7 uM and 0.3 uM, respectively) and antifungal activity against C.albicans 820 (MIC are 1.0 uM and 0.9 uM, respectively). Acipensin 6 has antibacterial activity against Gram-negative bacterium E.coli ML-35p (MIC=2.5 uM). Antimicrobial activity is reduced by high ionic strength. Acipensins 1, 2 and 6 have no hemolytic (up to 40 uM) or cytotoxic (up to 20 uM) effects on human cells in vitro. The chain is Histone H2A from Acipenser gueldenstaedtii (Russian sturgeon).